A 247-amino-acid polypeptide reads, in one-letter code: Phosphoribosylaminoimidazole-succinocarboxamide synthase (247 aa).

It belongs to the SAICAR synthetase family.

The enzyme catalyses 5-amino-1-(5-phospho-D-ribosyl)imidazole-4-carboxylate + L-aspartate + ATP = (2S)-2-[5-amino-1-(5-phospho-beta-D-ribosyl)imidazole-4-carboxamido]succinate + ADP + phosphate + 2 H(+). The protein operates within purine metabolism; IMP biosynthesis via de novo pathway; 5-amino-1-(5-phospho-D-ribosyl)imidazole-4-carboxamide from 5-amino-1-(5-phospho-D-ribosyl)imidazole-4-carboxylate: step 1/2. This Methanopyrus kandleri (strain AV19 / DSM 6324 / JCM 9639 / NBRC 100938) protein is Phosphoribosylaminoimidazole-succinocarboxamide synthase.